The primary structure comprises 316 residues: 4-hydroxy-3-methylbut-2-enyl diphosphate reductase (316 aa).

Cys12 provides a ligand contact to [4Fe-4S] cluster. 2 residues coordinate (2E)-4-hydroxy-3-methylbut-2-enyl diphosphate: His43 and His81. 2 residues coordinate dimethylallyl diphosphate: His43 and His81. The isopentenyl diphosphate site is built by His43 and His81. Cys103 contacts [4Fe-4S] cluster. His131 contributes to the (2E)-4-hydroxy-3-methylbut-2-enyl diphosphate binding site. A dimethylallyl diphosphate-binding site is contributed by His131. His131 is a binding site for isopentenyl diphosphate. The active-site Proton donor is Glu133. Thr170 contacts (2E)-4-hydroxy-3-methylbut-2-enyl diphosphate. Residue Cys198 coordinates [4Fe-4S] cluster. (2E)-4-hydroxy-3-methylbut-2-enyl diphosphate contacts are provided by Ser226, Asn228, and Ser271. Residues Ser226, Asn228, and Ser271 each contribute to the dimethylallyl diphosphate site. Ser226, Asn228, and Ser271 together coordinate isopentenyl diphosphate.

The protein belongs to the IspH family. The cofactor is [4Fe-4S] cluster.

The catalysed reaction is isopentenyl diphosphate + 2 oxidized [2Fe-2S]-[ferredoxin] + H2O = (2E)-4-hydroxy-3-methylbut-2-enyl diphosphate + 2 reduced [2Fe-2S]-[ferredoxin] + 2 H(+). It carries out the reaction dimethylallyl diphosphate + 2 oxidized [2Fe-2S]-[ferredoxin] + H2O = (2E)-4-hydroxy-3-methylbut-2-enyl diphosphate + 2 reduced [2Fe-2S]-[ferredoxin] + 2 H(+). It participates in isoprenoid biosynthesis; dimethylallyl diphosphate biosynthesis; dimethylallyl diphosphate from (2E)-4-hydroxy-3-methylbutenyl diphosphate: step 1/1. It functions in the pathway isoprenoid biosynthesis; isopentenyl diphosphate biosynthesis via DXP pathway; isopentenyl diphosphate from 1-deoxy-D-xylulose 5-phosphate: step 6/6. Catalyzes the conversion of 1-hydroxy-2-methyl-2-(E)-butenyl 4-diphosphate (HMBPP) into a mixture of isopentenyl diphosphate (IPP) and dimethylallyl diphosphate (DMAPP). Acts in the terminal step of the DOXP/MEP pathway for isoprenoid precursor biosynthesis. The chain is 4-hydroxy-3-methylbut-2-enyl diphosphate reductase from Geobacillus kaustophilus (strain HTA426).